The primary structure comprises 124 residues: MALHSAIKGKLISVIGDEDTCVGFLLGGVGEINKNRHPNFMVVDKNTPVSELEDCFKRFLKRDDIDIILINQNCAELIRHVIDAHTSPVPAVLEIPSKDHPYDASKDSILRRARGMFNPEDLVR.

The protein belongs to the V-ATPase F subunit family. In terms of assembly, V-ATPase is a heteromultimeric enzyme made up of two complexes: the ATP-hydrolytic V1 complex and the proton translocation V0 complex. The V1 complex consists of three catalytic AB heterodimers that form a heterohexamer, three peripheral stalks each consisting of EG heterodimers, one central rotor including subunits D and F, and the regulatory subunits C and H. The proton translocation complex V0 consists of the proton transport subunit a, a ring of proteolipid subunits c9c'', rotary subunit d, subunits e and f, and the accessory subunits VhaAC45 and ATP6AP2.

Subunit of the V1 complex of vacuolar(H+)-ATPase (V-ATPase), a multisubunit enzyme composed of a peripheral complex (V1) that hydrolyzes ATP and a membrane integral complex (V0) that translocates protons. V-ATPase is responsible for acidifying and maintaining the pH of intracellular compartments and in some cell types, is targeted to the plasma membrane, where it is responsible for acidifying the extracellular environment. The sequence is that of V-type proton ATPase subunit F 1 (Vha14) from Drosophila pseudoobscura pseudoobscura (Fruit fly).